The sequence spans 252 residues: Transmembrane ascorbate-dependent reductase CYB561 (252 aa).

At M1 the chain carries N-acetylmethionine. The Cytoplasmic segment spans residues 1–17 (MESPAGRTPAPGALPYY). A helical membrane pass occupies residues 18 to 38 (VAFSQLLGLTVVAVTGAWLGA). The 202-residue stretch at 20–221 (FSQLLGLTVV…FGAVVLYILT (202 aa)) folds into the Cytochrome b561 domain. Residues 39–52 (YRGGIAWESALQFN) are Vesicular-facing. A helical transmembrane segment spans residues 53-73 (VHPLCMIIGLVFLQGDALLVY). The heme b site is built by H54, R74, and K81. At 74–85 (RVFRNEAKRTTK) the chain is on the cytoplasmic side. L-ascorbate-binding residues include K81 and K85. Residues 86 to 106 (ILHGLLHVLAFVIALVGLVAV) traverse the membrane as a helical segment. Heme b-binding positions include H88, 117-120 (DLYS), and H122. Over 107-125 (FDYHRKKGIADLYSLHSWC) the chain is Vesicular. The chain crosses the membrane as a helical span at residues 126-146 (GILVFVLFLAQWLVGLGFFLF). Over 147-159 (PGASFSLRSRYRP) the chain is Cytoplasmic. R154 contacts L-ascorbate. Residues 160-180 (QHVFFGAAIFLLSVGTALLGL) traverse the membrane as a helical segment. Heme b is bound by residues H161 and E182. Over 181–199 (KEALLFQLGTKYSAFESEG) the chain is Vesicular. A helical membrane pass occupies residues 200 to 220 (VLANVLGLLLVAFGAVVLYIL). At 221-252 (TRADWKRPLQAEEQALSMDFKTLTEGDSPSSQ) the chain is on the cytoplasmic side. Residue K226 participates in heme b binding. S248 and S250 each carry phosphoserine.

Heme b is required as a cofactor.

It localises to the cytoplasmic vesicle. It is found in the secretory vesicle. The protein localises to the chromaffin granule membrane. It catalyses the reaction monodehydro-L-ascorbate radical(out) + L-ascorbate(in) = monodehydro-L-ascorbate radical(in) + L-ascorbate(out). Functionally, transmembrane reductase that uses ascorbate as an electron donor in the cytoplasm and transfers electrons across membranes to reduce monodehydro-L-ascorbate radical in the lumen of secretory vesicles. It is therefore involved the regeneration and homeostasis within secretory vesicles of ascorbate which in turn provides reducing equivalents needed to support the activity of intravesicular enzymes. The polypeptide is Transmembrane ascorbate-dependent reductase CYB561 (CYB561) (Sus scrofa (Pig)).